The following is a 254-amino-acid chain: Demethylmenaquinone methyltransferase (254 aa).

Residues threonine 62, aspartate 80, 122–123, and serine 139 contribute to the S-adenosyl-L-methionine site; that span reads DG.

The protein belongs to the class I-like SAM-binding methyltransferase superfamily. MenG/UbiE family.

The enzyme catalyses a 2-demethylmenaquinol + S-adenosyl-L-methionine = a menaquinol + S-adenosyl-L-homocysteine + H(+). The protein operates within quinol/quinone metabolism; menaquinone biosynthesis; menaquinol from 1,4-dihydroxy-2-naphthoate: step 2/2. Functionally, methyltransferase required for the conversion of demethylmenaquinol (DMKH2) to menaquinol (MKH2). The chain is Demethylmenaquinone methyltransferase from Parafrankia sp. (strain EAN1pec).